Here is an 827-residue protein sequence, read N- to C-terminus: Glycerol-3-phosphate acyltransferase (827 aa).

Positions 325–330 (CHRSHM) match the HXXXXD motif motif.

It belongs to the GPAT/DAPAT family.

Its subcellular location is the cell inner membrane. The catalysed reaction is sn-glycerol 3-phosphate + an acyl-CoA = a 1-acyl-sn-glycero-3-phosphate + CoA. The protein operates within phospholipid metabolism; CDP-diacylglycerol biosynthesis; CDP-diacylglycerol from sn-glycerol 3-phosphate: step 1/3. The protein is Glycerol-3-phosphate acyltransferase of Shigella flexneri serotype 5b (strain 8401).